A 235-amino-acid chain; its full sequence is MRPDDINPRTGLVVALVSVFLVFGFMFTVSGMKGETLGNIPLLAIGPAICLPGIAAIALARKTEGCTKWPENELLWVRKLPCFRKPKDKEVVELLRTPSDLESGKGSSDELAKKAGLRGKPPPQSQGEVSVASSINSPTPTEEGECQSLVQNGHQEETSRYLDGYCPSGSSLTYSALDVKCSARDRSECPEPEDSIFFVPQDSIIVCSYKQNSPYDRYCCYINQIQGRWDHETIV.

The next 2 membrane-spanning stretches (helical) occupy residues 12-32 and 40-60; these read LVVA…VSGM and IPLL…IALA. The interval 99–145 is disordered; it reads SDLESGKGSSDELAKKAGLRGKPPPQSQGEVSVASSINSPTPTEEGE. Positions 125-140 are enriched in polar residues; sequence SQGEVSVASSINSPTP.

It localises to the membrane. This is Transmembrane protein 215 (TMEM215) from Homo sapiens (Human).